The chain runs to 118 residues: Large ribosomal subunit protein bL20 (118 aa).

The protein belongs to the bacterial ribosomal protein bL20 family.

Its function is as follows. Binds directly to 23S ribosomal RNA and is necessary for the in vitro assembly process of the 50S ribosomal subunit. It is not involved in the protein synthesizing functions of that subunit. The chain is Large ribosomal subunit protein bL20 from Fervidobacterium nodosum (strain ATCC 35602 / DSM 5306 / Rt17-B1).